The primary structure comprises 96 residues: Small ribosomal subunit protein bS6 (96 aa).

Belongs to the bacterial ribosomal protein bS6 family.

In terms of biological role, binds together with bS18 to 16S ribosomal RNA. This is Small ribosomal subunit protein bS6 (rpsF) from Streptomyces coelicolor (strain ATCC BAA-471 / A3(2) / M145).